Consider the following 231-residue polypeptide: Sugar fermentation stimulation protein homolog (231 aa).

The protein belongs to the SfsA family.

The sequence is that of Sugar fermentation stimulation protein homolog from Geobacter sp. (strain M21).